The following is a 476-amino-acid chain: Adenosylhomocysteinase (476 aa).

Positions 67, 142, and 202 each coordinate substrate. Position 203-205 (203-205) interacts with NAD(+); sequence TTT. Residues Lys-232 and Asp-236 each coordinate substrate. NAD(+) is bound by residues Asn-237, 266-271, Glu-289, Asn-324, 345-347, and Asn-390; these read GYGDVG and IGH.

Belongs to the adenosylhomocysteinase family. NAD(+) is required as a cofactor.

The protein resides in the cytoplasm. The enzyme catalyses S-adenosyl-L-homocysteine + H2O = L-homocysteine + adenosine. It participates in amino-acid biosynthesis; L-homocysteine biosynthesis; L-homocysteine from S-adenosyl-L-homocysteine: step 1/1. Functionally, may play a key role in the regulation of the intracellular concentration of adenosylhomocysteine. The protein is Adenosylhomocysteinase of Synechococcus sp. (strain CC9311).